A 254-amino-acid polypeptide reads, in one-letter code: uncharacterized protein (254 aa).

The next 8 membrane-spanning stretches (helical) occupy residues 41–61, 64–84, 91–111, 125–145, 146–166, 172–192, 204–224, and 232–252; these read LFVF…IKII, ILQA…EYFF, IYCG…LYIL, LLIS…FVLA, PAAL…LWSF, FILL…IQLL, MIRA…ILTP, and LIMS…LLVL.

This sequence belongs to the TatC family.

It localises to the plastid. It is found in the chloroplast membrane. This is an uncharacterized protein from Pyropia yezoensis (Susabi-nori).